A 72-amino-acid chain; its full sequence is Gene 35 protein (72 aa).

This is Gene 35 protein (35) from Mycobacterium phage L5 (Mycobacteriophage L5).